We begin with the raw amino-acid sequence, 82 residues long: Myosin light chain alkali (82 aa).

Positions 7–42 constitute an EF-hand domain; the sequence is GCYGDFIECLKLYDKEENGTMMLAELQHALLALGES.

Myosin is a hexamer of 2 heavy chains and 4 light chains.

This Drosophila sechellia (Fruit fly) protein is Myosin light chain alkali (Mlc1).